Here is a 224-residue protein sequence, read N- to C-terminus: Germin-like protein 8-12 (224 aa).

Positions 1 to 23 are cleaved as a signal peptide; sequence MASSSLFLLGALLVLASWQAIVA. The cysteines at positions 33 and 48 are disulfide-linked. The region spanning 60–213 is the Cupin type-1 domain; it reads FNAAKFDMPR…AFQVEKKLID (154 aa). Asn-78 carries an N-linked (GlcNAc...) asparagine glycan. Positions 111, 113, 118, and 158 each coordinate Mn(2+).

The protein belongs to the germin family. Oligomer (believed to be a pentamer but probably hexamer).

It localises to the secreted. The protein localises to the extracellular space. Its subcellular location is the apoplast. In terms of biological role, plays a role in broad-spectrum disease resistance. Probably has no oxalate oxidase activity even if the active site is conserved. This Oryza sativa subsp. japonica (Rice) protein is Germin-like protein 8-12.